Consider the following 469-residue polypeptide: Exodeoxyribonuclease 7 large subunit (469 aa).

The protein belongs to the XseA family. Heterooligomer composed of large and small subunits.

The protein localises to the cytoplasm. It carries out the reaction Exonucleolytic cleavage in either 5'- to 3'- or 3'- to 5'-direction to yield nucleoside 5'-phosphates.. Bidirectionally degrades single-stranded DNA into large acid-insoluble oligonucleotides, which are then degraded further into small acid-soluble oligonucleotides. This is Exodeoxyribonuclease 7 large subunit from Mycoplasma mycoides subsp. mycoides SC (strain CCUG 32753 / NCTC 10114 / PG1).